The chain runs to 512 residues: Cytochrome P450 1A1 (512 aa).

The segment at 29-40 is mitochondrial targeting signal; it reads SRPRVPKGLKNP. Serine 67 carries O-linked (GlcNAc) serine glycosylation. Residue phenylalanine 224 coordinates substrate. Residue cysteine 457 participates in heme binding.

It belongs to the cytochrome P450 family. As to quaternary structure, interacts with cytosolic chaperones HSP70 and HSP90; this interaction is required for initial targeting to mitochondria. Interacts (via mitochondrial targeting signal) with TOMM40 (via N-terminus); this interaction is required for translocation across the mitochondrial outer membrane. Heme is required as a cofactor.

It is found in the endoplasmic reticulum membrane. The protein resides in the mitochondrion inner membrane. It localises to the microsome membrane. The protein localises to the cytoplasm. It carries out the reaction an organic molecule + reduced [NADPH--hemoprotein reductase] + O2 = an alcohol + oxidized [NADPH--hemoprotein reductase] + H2O + H(+). It catalyses the reaction estrone + reduced [NADPH--hemoprotein reductase] + O2 = 2-hydroxyestrone + oxidized [NADPH--hemoprotein reductase] + H2O + H(+). The enzyme catalyses estrone + reduced [NADPH--hemoprotein reductase] + O2 = 4-hydroxyestrone + oxidized [NADPH--hemoprotein reductase] + H2O + H(+). The catalysed reaction is estrone + reduced [NADPH--hemoprotein reductase] + O2 = 6alpha-hydroxyestrone + oxidized [NADPH--hemoprotein reductase] + H2O + H(+). It carries out the reaction estrone + reduced [NADPH--hemoprotein reductase] + O2 = 15alpha-hydroxyestrone + oxidized [NADPH--hemoprotein reductase] + H2O + H(+). It catalyses the reaction estrone + reduced [NADPH--hemoprotein reductase] + O2 = 16alpha-hydroxyestrone + oxidized [NADPH--hemoprotein reductase] + H2O + H(+). The enzyme catalyses 17beta-estradiol + reduced [NADPH--hemoprotein reductase] + O2 = 2-hydroxy-17beta-estradiol + oxidized [NADPH--hemoprotein reductase] + H2O + H(+). The catalysed reaction is 17beta-estradiol + reduced [NADPH--hemoprotein reductase] + O2 = 4-hydroxy-17beta-estradiol + oxidized [NADPH--hemoprotein reductase] + H2O + H(+). It carries out the reaction 17beta-estradiol + reduced [NADPH--hemoprotein reductase] + O2 = 6alpha-hydroxy-17beta-estradiol + oxidized [NADPH--hemoprotein reductase] + H2O + H(+). It catalyses the reaction 17beta-estradiol + reduced [NADPH--hemoprotein reductase] + O2 = 7alpha-hydroxy-17beta-estradiol + oxidized [NADPH--hemoprotein reductase] + H2O + H(+). The enzyme catalyses 17beta-estradiol + reduced [NADPH--hemoprotein reductase] + O2 = 15alpha-hydroxy-17beta-estradiol + oxidized [NADPH--hemoprotein reductase] + H2O + H(+). The catalysed reaction is (5Z,8Z,11Z)-eicosatrienoate + reduced [NADPH--hemoprotein reductase] + O2 = 19-hydroxy-(5Z,8Z,11Z)-eicosatrienoate + oxidized [NADPH--hemoprotein reductase] + H2O + H(+). It carries out the reaction (5Z,8Z,11Z,14Z)-eicosatetraenoate + reduced [NADPH--hemoprotein reductase] + O2 = 16-hydroxy-(5Z,8Z,11Z,14Z)-eicosatetraenoate + oxidized [NADPH--hemoprotein reductase] + H2O + H(+). It catalyses the reaction (5Z,8Z,11Z,14Z)-eicosatetraenoate + reduced [NADPH--hemoprotein reductase] + O2 = 17-hydroxy-(5Z,8Z,11Z,14Z)-eicosatetraenoate + oxidized [NADPH--hemoprotein reductase] + H2O + H(+). The enzyme catalyses (5Z,8Z,11Z,14Z)-eicosatetraenoate + reduced [NADPH--hemoprotein reductase] + O2 = 18-hydroxy-(5Z,8Z,11Z,14Z)-eicosatetraenoate + oxidized [NADPH--hemoprotein reductase] + H2O + H(+). The catalysed reaction is (5Z,8Z,11Z,14Z)-eicosatetraenoate + reduced [NADPH--hemoprotein reductase] + O2 = 19-hydroxy-(5Z,8Z,11Z,14Z)-eicosatetraenoate + oxidized [NADPH--hemoprotein reductase] + H2O + H(+). It carries out the reaction (5Z,8Z,11Z,14Z,17Z)-eicosapentaenoate + reduced [NADPH--hemoprotein reductase] + O2 = 19-hydroxy-(5Z,8Z,11Z,14Z,17Z)-eicosapentaenoate + oxidized [NADPH--hemoprotein reductase] + H2O + H(+). It catalyses the reaction (5Z,8Z,11Z,14Z)-eicosatetraenoate + reduced [NADPH--hemoprotein reductase] + O2 = (8R,9S)-epoxy-(5Z,11Z,14Z)-eicosatrienoate + oxidized [NADPH--hemoprotein reductase] + H2O + H(+). The enzyme catalyses (5Z,8Z,11Z,14Z)-eicosatetraenoate + reduced [NADPH--hemoprotein reductase] + O2 = (11R,12S)-epoxy-(5Z,8Z,14Z)-eicosatrienoate + oxidized [NADPH--hemoprotein reductase] + H2O + H(+). The catalysed reaction is (5Z,8Z,11Z,14Z)-eicosatetraenoate + reduced [NADPH--hemoprotein reductase] + O2 = (14S,15R)-epoxy-(5Z,8Z,11Z)-eicosatrienoate + oxidized [NADPH--hemoprotein reductase] + H2O + H(+). It carries out the reaction (5Z,8Z,11Z,14Z)-eicosatetraenoate + reduced [NADPH--hemoprotein reductase] + O2 = (14R,15S)-epoxy-(5Z,8Z,11Z)-eicosatrienoate + oxidized [NADPH--hemoprotein reductase] + H2O + H(+). It catalyses the reaction (5Z,8Z,11Z,14Z,17Z)-eicosapentaenoate + reduced [NADPH--hemoprotein reductase] + O2 = (17R,18S)-epoxy-(5Z,8Z,11Z,14Z)-eicosatetraenoate + oxidized [NADPH--hemoprotein reductase] + H2O + H(+). The enzyme catalyses (4Z,7Z,10Z,13Z,16Z,19Z)-docosahexaenoate + reduced [NADPH--hemoprotein reductase] + O2 = (19S,20R)-epoxy-(4Z,7Z,10Z,13Z,16Z)-docosapentaenoate + oxidized [NADPH--hemoprotein reductase] + H2O + H(+). The catalysed reaction is (4Z,7Z,10Z,13Z,16Z,19Z)-docosahexaenoate + reduced [NADPH--hemoprotein reductase] + O2 = (19R,20S)-epoxy-(4Z,7Z,10Z,13Z,16Z)-docosapentaenoate + oxidized [NADPH--hemoprotein reductase] + H2O + H(+). It carries out the reaction all-trans-retinol + reduced [NADPH--hemoprotein reductase] + O2 = all-trans-retinal + oxidized [NADPH--hemoprotein reductase] + 2 H2O + H(+). It catalyses the reaction all-trans-retinal + reduced [NADPH--hemoprotein reductase] + O2 = all-trans-retinoate + oxidized [NADPH--hemoprotein reductase] + H2O + 2 H(+). The enzyme catalyses (13S)-hydroperoxy-(9Z,11E)-octadecadienoate = 13-oxo-(9Z,11E)-octadecadienoate + H2O. The catalysed reaction is (12S)-hydroperoxy-(5Z,8Z,10E,14Z)-eicosatetraenoate = 12-oxo-(5Z,8Z,10E,14Z)-eicosatetraenoate + H2O. It carries out the reaction (15S)-hydroperoxy-(5Z,8Z,11Z,13E)-eicosatetraenoate = 15-oxo-(5Z,8Z,11Z,13E)-eicosatetraenoate + H2O. It catalyses the reaction (5S)-hydroperoxy-(6E,8Z,11Z,14Z)-eicosatetraenoate = 5-oxo-(6E,8Z,11Z,14Z)-eicosatetraenoate + H2O. It functions in the pathway steroid hormone biosynthesis. The protein operates within lipid metabolism; fatty acid metabolism. It participates in cofactor metabolism; retinol metabolism. A cytochrome P450 monooxygenase involved in the metabolism of various endogenous substrates, including fatty acids, steroid hormones and vitamins. Mechanistically, uses molecular oxygen inserting one oxygen atom into a substrate, and reducing the second into a water molecule, with two electrons provided by NADPH via cytochrome P450 reductase (CPR; NADPH-ferrihemoprotein reductase). Catalyzes the hydroxylation of carbon-hydrogen bonds. Exhibits high catalytic activity for the formation of hydroxyestrogens from estrone (E1) and 17beta-estradiol (E2), namely 2-hydroxy E1 and E2, as well as D-ring hydroxylated E1 and E2 at the C15alpha and C16alpha positions. Displays different regioselectivities for polyunsaturated fatty acids (PUFA) hydroxylation. Catalyzes the epoxidation of double bonds of certain PUFA. Converts arachidonic acid toward epoxyeicosatrienoic acid (EET) regioisomers, 8,9-, 11,12-, and 14,15-EET, that function as lipid mediators in the vascular system. Displays an absolute stereoselectivity in the epoxidation of eicosapentaenoic acid (EPA) producing the 17(R),18(S) enantiomer. May play an important role in all-trans retinoic acid biosynthesis in extrahepatic tissues. Catalyzes two successive oxidative transformation of all-trans retinol to all-trans retinal and then to the active form all-trans retinoic acid. May also participate in eicosanoids metabolism by converting hydroperoxide species into oxo metabolites (lipoxygenase-like reaction, NADPH-independent). This is Cytochrome P450 1A1 (CYP1A1) from Macaca fascicularis (Crab-eating macaque).